A 558-amino-acid chain; its full sequence is Putative transposase for insertion sequence IS1162 (558 aa).

In terms of domain architecture, HTH IS408-type spans 11–93 (IKECLRLKFE…PDLITIHREL (83 aa)). The H-T-H motif DNA-binding region spans 23 to 44 (LSHEKIARALQLSKGVVSKYVT). The Integrase catalytic domain maps to 139 to 336 (QQHRAGEKLF…HPYEVVTFKR (198 aa)). Positions 486-558 (QGLDQQPLPK…AAGQPQPELR (73 aa)) are disordered.

Belongs to the transposase IS21/IS408/IS1162 family.

Functionally, required for the transposition of the insertion element. This Pseudomonas fluorescens protein is Putative transposase for insertion sequence IS1162.